A 158-amino-acid polypeptide reads, in one-letter code: Endoribonuclease YbeY (158 aa).

3 residues coordinate Zn(2+): His122, His126, and His132.

The protein belongs to the endoribonuclease YbeY family. Zn(2+) is required as a cofactor.

The protein localises to the cytoplasm. Its function is as follows. Single strand-specific metallo-endoribonuclease involved in late-stage 70S ribosome quality control and in maturation of the 3' terminus of the 16S rRNA. This chain is Endoribonuclease YbeY, found in Bacillus licheniformis (strain ATCC 14580 / DSM 13 / JCM 2505 / CCUG 7422 / NBRC 12200 / NCIMB 9375 / NCTC 10341 / NRRL NRS-1264 / Gibson 46).